The primary structure comprises 236 residues: Mammalian ependymin-related protein 1 (236 aa).

The first 35 residues, 1 to 35 (MPRRAPLRVARGSLDAWLLGGLWVCALGCLCGVGM), serve as a signal peptide directing secretion. Disulfide bonds link Cys54-Cys184, Cys100-Cys234, and Cys125-Cys222. Asn142 and Asn194 each carry an N-linked (GlcNAc...) asparagine glycan.

It belongs to the ependymin family. Homodimer. Post-translationally, N-glycosylated; the glycan contains mannose-6-phosphate moieties.

The protein resides in the lysosome lumen. The protein localises to the secreted. Its function is as follows. Binds anionic lipids and gangliosides at acidic pH. The sequence is that of Mammalian ependymin-related protein 1 (EPDR1) from Bos taurus (Bovine).